Here is a 184-residue protein sequence, read N- to C-terminus: Large ribosomal subunit protein uL6 (184 aa).

This sequence belongs to the universal ribosomal protein uL6 family. Part of the 50S ribosomal subunit.

Its function is as follows. This protein binds to the 23S rRNA, and is important in its secondary structure. It is located near the subunit interface in the base of the L7/L12 stalk, and near the tRNA binding site of the peptidyltransferase center. This Mycoplasma pneumoniae (strain ATCC 29342 / M129 / Subtype 1) (Mycoplasmoides pneumoniae) protein is Large ribosomal subunit protein uL6.